A 145-amino-acid polypeptide reads, in one-letter code: 3-hydroxyacyl-[acyl-carrier-protein] dehydratase FabZ (145 aa).

H47 is a catalytic residue.

The protein belongs to the thioester dehydratase family. FabZ subfamily.

The protein resides in the cytoplasm. It catalyses the reaction a (3R)-hydroxyacyl-[ACP] = a (2E)-enoyl-[ACP] + H2O. Involved in unsaturated fatty acids biosynthesis. Catalyzes the dehydration of short chain beta-hydroxyacyl-ACPs and long chain saturated and unsaturated beta-hydroxyacyl-ACPs. In Polaromonas naphthalenivorans (strain CJ2), this protein is 3-hydroxyacyl-[acyl-carrier-protein] dehydratase FabZ.